Reading from the N-terminus, the 287-residue chain is Urease accessory protein UreD (287 aa).

It belongs to the UreD family. UreD, UreF and UreG form a complex that acts as a GTP-hydrolysis-dependent molecular chaperone, activating the urease apoprotein by helping to assemble the nickel containing metallocenter of UreC. The UreE protein probably delivers the nickel.

The protein resides in the cytoplasm. Required for maturation of urease via the functional incorporation of the urease nickel metallocenter. This is Urease accessory protein UreD from Herpetosiphon aurantiacus (strain ATCC 23779 / DSM 785 / 114-95).